Consider the following 265-residue polypeptide: Eukaryotic translation initiation factor 3 subunit J (265 aa).

Acidic residues predominate over residues 24–34 (AGDEPILDSWD). The segment at 24–74 (AGDEPILDSWDEEPKAKKEAAKPKPKPKAGGKKNAKGEEKKEQVLAIDELD) is disordered. Residues 35–45 (EEPKAKKEAAK) are compositionally biased toward basic and acidic residues. Residues 46 to 57 (PKPKPKAGGKKN) are compositionally biased toward basic residues. Coiled-coil stretches lie at residues 78–106 (RKELMKKAELESDLNNAADLLGDLEMAEE) and 190–220 (IENIRQTVATLNILIKDKEKAERQARLARVK).

Belongs to the eIF-3 subunit J family. Component of the eukaryotic translation initiation factor 3 (eIF-3) complex.

Its subcellular location is the cytoplasm. Its function is as follows. Component of the eukaryotic translation initiation factor 3 (eIF-3) complex, which is involved in protein synthesis of a specialized repertoire of mRNAs and, together with other initiation factors, stimulates binding of mRNA and methionyl-tRNAi to the 40S ribosome. The eIF-3 complex specifically targets and initiates translation of a subset of mRNAs involved in cell proliferation. The protein is Eukaryotic translation initiation factor 3 subunit J of Candida glabrata (strain ATCC 2001 / BCRC 20586 / JCM 3761 / NBRC 0622 / NRRL Y-65 / CBS 138) (Yeast).